The primary structure comprises 556 residues: 2-succinyl-5-enolpyruvyl-6-hydroxy-3-cyclohexene-1-carboxylate synthase (556 aa).

This sequence belongs to the TPP enzyme family. MenD subfamily. In terms of assembly, homodimer. Requires Mg(2+) as cofactor. Mn(2+) is required as a cofactor. Thiamine diphosphate serves as cofactor.

The catalysed reaction is isochorismate + 2-oxoglutarate + H(+) = 5-enolpyruvoyl-6-hydroxy-2-succinyl-cyclohex-3-ene-1-carboxylate + CO2. It participates in quinol/quinone metabolism; 1,4-dihydroxy-2-naphthoate biosynthesis; 1,4-dihydroxy-2-naphthoate from chorismate: step 2/7. The protein operates within quinol/quinone metabolism; menaquinone biosynthesis. Functionally, catalyzes the thiamine diphosphate-dependent decarboxylation of 2-oxoglutarate and the subsequent addition of the resulting succinic semialdehyde-thiamine pyrophosphate anion to isochorismate to yield 2-succinyl-5-enolpyruvyl-6-hydroxy-3-cyclohexene-1-carboxylate (SEPHCHC). The chain is 2-succinyl-5-enolpyruvyl-6-hydroxy-3-cyclohexene-1-carboxylate synthase from Escherichia coli (strain UTI89 / UPEC).